The following is a 351-amino-acid chain: MDEKIETRLIGATMQSNEPDLERSIRPKRLSDYIGQAAVREQMDIFIRAATNRREALDHVLIFGPPGLGKTTLAHIIAHEMQAGLKQTSGPVLEKAGDLAALLTNLEPHDVLFIDEIHRLNPAIEEVLYPALEDFQLDIIIGEGPSARSIKLDLPPFTLVGATTRAGLLTSPLRDRFGIVQRLEFYRIPDLIHIVKRAAHILNVVIDENGAGEIARRSRGTPRIANRLLRRVRDFAEVRANGMINESIAKEALDLLNVDIRGLDVMDRKLLETIIKKFQGGPVGIESLAAAISEERGTIEDVIEPYLIQEGFILRTPRGRIATELTYQHFKLPLPTQSTLQENFDLLGKVE.

Positions 1–186 are large ATPase domain (RuvB-L); the sequence is MDEKIETRLI…FGIVQRLEFY (186 aa). ATP is bound by residues Ile25, Arg26, Gly67, Lys70, Thr71, Thr72, 133–135, Arg176, Tyr186, and Arg223; that span reads EDF. Residue Thr71 participates in Mg(2+) binding. A small ATPAse domain (RuvB-S) region spans residues 187-257; sequence RIPDLIHIVK…IAKEALDLLN (71 aa). The head domain (RuvB-H) stretch occupies residues 260-351; it reads IRGLDVMDRK…ENFDLLGKVE (92 aa). DNA is bound by residues Arg296, Arg315, and Arg320.

It belongs to the RuvB family. In terms of assembly, homohexamer. Forms an RuvA(8)-RuvB(12)-Holliday junction (HJ) complex. HJ DNA is sandwiched between 2 RuvA tetramers; dsDNA enters through RuvA and exits via RuvB. An RuvB hexamer assembles on each DNA strand where it exits the tetramer. Each RuvB hexamer is contacted by two RuvA subunits (via domain III) on 2 adjacent RuvB subunits; this complex drives branch migration. In the full resolvosome a probable DNA-RuvA(4)-RuvB(12)-RuvC(2) complex forms which resolves the HJ.

The protein resides in the cytoplasm. It catalyses the reaction ATP + H2O = ADP + phosphate + H(+). Its function is as follows. The RuvA-RuvB-RuvC complex processes Holliday junction (HJ) DNA during genetic recombination and DNA repair, while the RuvA-RuvB complex plays an important role in the rescue of blocked DNA replication forks via replication fork reversal (RFR). RuvA specifically binds to HJ cruciform DNA, conferring on it an open structure. The RuvB hexamer acts as an ATP-dependent pump, pulling dsDNA into and through the RuvAB complex. RuvB forms 2 homohexamers on either side of HJ DNA bound by 1 or 2 RuvA tetramers; 4 subunits per hexamer contact DNA at a time. Coordinated motions by a converter formed by DNA-disengaged RuvB subunits stimulates ATP hydrolysis and nucleotide exchange. Immobilization of the converter enables RuvB to convert the ATP-contained energy into a lever motion, pulling 2 nucleotides of DNA out of the RuvA tetramer per ATP hydrolyzed, thus driving DNA branch migration. The RuvB motors rotate together with the DNA substrate, which together with the progressing nucleotide cycle form the mechanistic basis for DNA recombination by continuous HJ branch migration. Branch migration allows RuvC to scan DNA until it finds its consensus sequence, where it cleaves and resolves cruciform DNA. The protein is Holliday junction branch migration complex subunit RuvB of Coxiella burnetii (strain CbuG_Q212) (Coxiella burnetii (strain Q212)).